The following is an 82-amino-acid chain: Small ribosomal subunit protein bS16 (82 aa).

This sequence belongs to the bacterial ribosomal protein bS16 family.

This chain is Small ribosomal subunit protein bS16, found in Psychromonas ingrahamii (strain DSM 17664 / CCUG 51855 / 37).